The following is a 365-amino-acid chain: Caffeic acid 3-O-methyltransferase 1 (365 aa).

Residue 130 to 136 coordinates substrate; it reads MNQDKVL. The interval 162 to 180 is substrate binding; the sequence is AFEYHGTDPRFNKVFNKGM. S-adenosyl-L-methionine is bound by residues glycine 208, aspartate 231, aspartate 251, methionine 252, and lysine 265. Histidine 269 functions as the Proton acceptor in the catalytic mechanism.

The protein belongs to the class I-like SAM-binding methyltransferase superfamily. Cation-independent O-methyltransferase family. COMT subfamily. In terms of assembly, homodimer.

It carries out the reaction (E)-caffeate + S-adenosyl-L-methionine = (E)-ferulate + S-adenosyl-L-homocysteine + H(+). It functions in the pathway aromatic compound metabolism; phenylpropanoid biosynthesis. Its function is as follows. Catalyzes the conversion of caffeic acid to ferulic acid and of 5-hydroxyferulic acid to sinapic acid. The resulting products may subsequently be converted to the corresponding alcohols that are incorporated into lignins. This is Caffeic acid 3-O-methyltransferase 1 (HOMT1) from Populus kitakamiensis (Aspen).